Reading from the N-terminus, the 184-residue chain is Large ribosomal subunit protein bL17 (184 aa).

The interval 126-184 is disordered; that stretch reads TRAARAAASKQTADEAQVEETPAEEVTEETAAEETTEAAQADEAPAEEAPVEEKKDEEK. Acidic residues predominate over residues 141 to 161; that stretch reads AQVEETPAEEVTEETAAEETT.

This sequence belongs to the bacterial ribosomal protein bL17 family. As to quaternary structure, part of the 50S ribosomal subunit. Contacts protein L32.

This is Large ribosomal subunit protein bL17 from Corynebacterium efficiens (strain DSM 44549 / YS-314 / AJ 12310 / JCM 11189 / NBRC 100395).